The sequence spans 921 residues: GPI ethanolamine phosphate transferase 1 (921 aa).

Residues 1–9 (MKNNTRFTL) are Cytoplasmic-facing. A helical membrane pass occupies residues 10-30 (IVVGVLFHLLYLWSIFDIYFI). Over 31–457 (SPLVHGMEQK…TTYNWRFIRT (427 aa)) the chain is Lumenal. 5 N-linked (GlcNAc...) asparagine glycosylation sites follow: Asn90, Asn138, Asn198, Asn262, and Asn286. A helical membrane pass occupies residues 458–478 (IVTFGFLGWICYSFMIFLKLF). Residues 479–488 (ILNNSQTTHP) are Cytoplasmic-facing. Residues 489-509 (SILNISIFTSLGLILNYILFY) traverse the membrane as a helical segment. The Lumenal portion of the chain corresponds to 510–516 (QKSPLNF). Residues 517–537 (YLYLIFPLFFWSKIFSNTAII) form a helical membrane-spanning segment. Residues 538 to 552 (RDGVNEFFKGISKAE) are Cytoplasmic-facing. A helical membrane pass occupies residues 553-573 (SVIIGLTIISIYEGIVYGFFH). Topologically, residues 574 to 575 (RW) are lumenal. A helical transmembrane segment spans residues 576–596 (ILSLILVSFAFYPLVCGVTDL). Residues 597-599 (FTN) are Cytoplasmic-facing. The chain crosses the membrane as a helical span at residues 600–620 (LLWILTSVGLSSFTLLDAVKI). A topological domain (lumenal) is located at residue Glu621. The chain crosses the membrane as a helical span at residues 622–642 (NLQQIQVAGILIVLSSAYAVM). Topologically, residues 643–654 (RLSQDISKYTQH) are cytoplasmic. The helical transmembrane segment at 655 to 675 (LLSIQIFLVSGMLHFTSKSVI) threads the bilayer. Topologically, residues 676-684 (SLQKREGLP) are lumenal. The chain crosses the membrane as a helical span at residues 685 to 705 (AFAQVGGWAILVISLTIMPFL). Over 706 to 728 (HYLKPNNNYQVRLLTIYLTFAPS) the chain is Cytoplasmic. A helical membrane pass occupies residues 729 to 749 (FIILSISFEALFYFIFTAYIV). The Lumenal portion of the chain corresponds to 750–777 (QWLQIEKNIKVLKDEQKSDSNGIQLLRV). The chain crosses the membrane as a helical span at residues 778–798 (AIIGFFLQQIAFFGTGNVASI). The Cytoplasmic segment spans residues 799–819 (SSFSLDSVYRLLPVFDPFPMG). A helical transmembrane segment spans residues 820–840 (ALLMLKLIIPYVLLSCGLGIM). Residues 841–849 (NIQLDIKDY) are Lumenal-facing. The helical transmembrane segment at 850–870 (TISSLIISTSDILSLNFFYLL) threads the bilayer. Residues 871 to 878 (KTEGSWLD) lie on the Cytoplasmic side of the membrane. Residues 879–899 (IGVTISNYCLAILSSLFMLIL) form a helical membrane-spanning segment. At 900–921 (EIVGHQLLKNVTRATSSQKKTN) the chain is on the lumenal side. Asn909 is a glycosylation site (N-linked (GlcNAc...) asparagine).

Belongs to the PIGG/PIGN/PIGO family. PIGN subfamily.

It localises to the endoplasmic reticulum membrane. Its pathway is glycolipid biosynthesis; glycosylphosphatidylinositol-anchor biosynthesis. Functionally, ethanolamine phosphate transferase involved in glycosylphosphatidylinositol-anchor biosynthesis. Transfers ethanolamine phosphate to the first alpha-1,4-linked mannose of the glycosylphosphatidylinositol precursor of GPI-anchor. In Candida glabrata (strain ATCC 2001 / BCRC 20586 / JCM 3761 / NBRC 0622 / NRRL Y-65 / CBS 138) (Yeast), this protein is GPI ethanolamine phosphate transferase 1 (MCD4).